We begin with the raw amino-acid sequence, 457 residues long: tRNA modification GTPase MnmE (457 aa).

(6S)-5-formyl-5,6,7,8-tetrahydrofolate contacts are provided by arginine 22, glutamate 83, and arginine 122. The TrmE-type G domain maps to 219-378; it reads GLATAIIGRP…LEEAIKALFF (160 aa). Asparagine 229 is a binding site for K(+). GTP contacts are provided by residues 229-234, 248-254, and 273-276; these read NVGKSS, TDIAGTT, and DTAG. Residue serine 233 coordinates Mg(2+). K(+) contacts are provided by threonine 248, isoleucine 250, and threonine 253. Threonine 254 serves as a coordination point for Mg(2+). Lysine 457 is a binding site for (6S)-5-formyl-5,6,7,8-tetrahydrofolate.

This sequence belongs to the TRAFAC class TrmE-Era-EngA-EngB-Septin-like GTPase superfamily. TrmE GTPase family. As to quaternary structure, homodimer. Heterotetramer of two MnmE and two MnmG subunits. K(+) is required as a cofactor.

The protein resides in the cytoplasm. Its function is as follows. Exhibits a very high intrinsic GTPase hydrolysis rate. Involved in the addition of a carboxymethylaminomethyl (cmnm) group at the wobble position (U34) of certain tRNAs, forming tRNA-cmnm(5)s(2)U34. This chain is tRNA modification GTPase MnmE, found in Listeria innocua serovar 6a (strain ATCC BAA-680 / CLIP 11262).